Reading from the N-terminus, the 289-residue chain is Pantothenate synthetase (289 aa).

30 to 37 (MGYLHKGH) is a binding site for ATP. The Proton donor role is filled by His37. A (R)-pantoate-binding site is contributed by Gln61. Gln61 contributes to the beta-alanine binding site. An ATP-binding site is contributed by 147–150 (GEKD). Gln153 is a (R)-pantoate binding site. ATP contacts are provided by residues Val176 and 184-187 (CSSR).

This sequence belongs to the pantothenate synthetase family. As to quaternary structure, homodimer.

The protein localises to the cytoplasm. It catalyses the reaction (R)-pantoate + beta-alanine + ATP = (R)-pantothenate + AMP + diphosphate + H(+). Its pathway is cofactor biosynthesis; (R)-pantothenate biosynthesis; (R)-pantothenate from (R)-pantoate and beta-alanine: step 1/1. Its function is as follows. Catalyzes the condensation of pantoate with beta-alanine in an ATP-dependent reaction via a pantoyl-adenylate intermediate. In Allorhizobium ampelinum (strain ATCC BAA-846 / DSM 112012 / S4) (Agrobacterium vitis (strain S4)), this protein is Pantothenate synthetase.